Consider the following 302-residue polypeptide: UDP-N-acetylenolpyruvoylglucosamine reductase (302 aa).

The 180-residue stretch at 31 to 210 (IGGQTKVYFR…ENEVLELKKK (180 aa)) folds into the FAD-binding PCMH-type domain. R175 is an active-site residue. The active-site Proton donor is the S224. Residue E297 is part of the active site.

The protein belongs to the MurB family. Requires FAD as cofactor.

The protein resides in the cytoplasm. It carries out the reaction UDP-N-acetyl-alpha-D-muramate + NADP(+) = UDP-N-acetyl-3-O-(1-carboxyvinyl)-alpha-D-glucosamine + NADPH + H(+). The protein operates within cell wall biogenesis; peptidoglycan biosynthesis. In terms of biological role, cell wall formation. The chain is UDP-N-acetylenolpyruvoylglucosamine reductase from Pelagibacter ubique (strain HTCC1062).